A 528-amino-acid polypeptide reads, in one-letter code: GMP synthase [glutamine-hydrolyzing] (528 aa).

The Glutamine amidotransferase type-1 domain occupies 13-204 (AIVILDFGSQ…VYDICSCEPD (192 aa)). The Nucleophile role is filled by Cys90. Residues His178 and Glu180 contribute to the active site. The 199-residue stretch at 205–403 (WTTNLFIDEA…LGLPDEIVRR (199 aa)) folds into the GMPS ATP-PPase domain. 232–238 (SGGVDSS) is a binding site for ATP.

Homodimer.

The catalysed reaction is XMP + L-glutamine + ATP + H2O = GMP + L-glutamate + AMP + diphosphate + 2 H(+). It functions in the pathway purine metabolism; GMP biosynthesis; GMP from XMP (L-Gln route): step 1/1. Functionally, catalyzes the synthesis of GMP from XMP. The protein is GMP synthase [glutamine-hydrolyzing] of Prochlorococcus marinus (strain NATL2A).